A 346-amino-acid polypeptide reads, in one-letter code: Proto-oncogene serine/threonine-protein kinase mos (346 aa).

Residues 60–341 (VCLLQRLGAG…RPLLVDLTSL (282 aa)) enclose the Protein kinase domain. Residues 66-74 (LGAGGFGSV) and Lys-87 each bind ATP. Catalysis depends on Asp-201, which acts as the Proton acceptor.

It belongs to the protein kinase superfamily. Ser/Thr protein kinase family.

It carries out the reaction L-seryl-[protein] + ATP = O-phospho-L-seryl-[protein] + ADP + H(+). It catalyses the reaction L-threonyl-[protein] + ATP = O-phospho-L-threonyl-[protein] + ADP + H(+). In Chlorocebus aethiops (Green monkey), this protein is Proto-oncogene serine/threonine-protein kinase mos.